Consider the following 194-residue polypeptide: Ribosome maturation factor RimM (194 aa).

The 82-residue stretch at 113–194 (DGEYYWIDLI…RIVADWGLDY (82 aa)) folds into the PRC barrel domain.

This sequence belongs to the RimM family. Binds ribosomal protein uS19.

Its subcellular location is the cytoplasm. Its function is as follows. An accessory protein needed during the final step in the assembly of 30S ribosomal subunit, possibly for assembly of the head region. Essential for efficient processing of 16S rRNA. May be needed both before and after RbfA during the maturation of 16S rRNA. It has affinity for free ribosomal 30S subunits but not for 70S ribosomes. This chain is Ribosome maturation factor RimM, found in Leptothrix cholodnii (strain ATCC 51168 / LMG 8142 / SP-6) (Leptothrix discophora (strain SP-6)).